The chain runs to 723 residues: Fatty acid oxidation complex subunit alpha (723 aa).

Residues 1–189 form an enoyl-CoA hydratase/isomerase region; it reads MIYQAETLQV…KIGLLDAVVD (189 aa). Residue Asp296 participates in substrate binding. Positions 311–723 are 3-hydroxyacyl-CoA dehydrogenase; it reads NKETQRAAVL…FYGAQQQGSI (413 aa). NAD(+)-binding positions include Met325, Asp344, 401-403, Lys408, and Ser430; that span reads VVE. His451 (for 3-hydroxyacyl-CoA dehydrogenase activity) is an active-site residue. Asn454 contributes to the NAD(+) binding site. Substrate is bound by residues Asn501 and Tyr661.

The protein in the N-terminal section; belongs to the enoyl-CoA hydratase/isomerase family. It in the C-terminal section; belongs to the 3-hydroxyacyl-CoA dehydrogenase family. In terms of assembly, heterotetramer of two alpha chains (FadB) and two beta chains (FadA).

The catalysed reaction is a (3S)-3-hydroxyacyl-CoA + NAD(+) = a 3-oxoacyl-CoA + NADH + H(+). The enzyme catalyses a (3S)-3-hydroxyacyl-CoA = a (2E)-enoyl-CoA + H2O. It catalyses the reaction a 4-saturated-(3S)-3-hydroxyacyl-CoA = a (3E)-enoyl-CoA + H2O. It carries out the reaction (3S)-3-hydroxybutanoyl-CoA = (3R)-3-hydroxybutanoyl-CoA. The catalysed reaction is a (3Z)-enoyl-CoA = a 4-saturated (2E)-enoyl-CoA. The enzyme catalyses a (3E)-enoyl-CoA = a 4-saturated (2E)-enoyl-CoA. It participates in lipid metabolism; fatty acid beta-oxidation. Involved in the aerobic and anaerobic degradation of long-chain fatty acids via beta-oxidation cycle. Catalyzes the formation of 3-oxoacyl-CoA from enoyl-CoA via L-3-hydroxyacyl-CoA. It can also use D-3-hydroxyacyl-CoA and cis-3-enoyl-CoA as substrate. This is Fatty acid oxidation complex subunit alpha from Vibrio vulnificus (strain CMCP6).